Here is a 118-residue protein sequence, read N- to C-terminus: Large ribosomal subunit protein bL20 (118 aa).

Belongs to the bacterial ribosomal protein bL20 family.

Its function is as follows. Binds directly to 23S ribosomal RNA and is necessary for the in vitro assembly process of the 50S ribosomal subunit. It is not involved in the protein synthesizing functions of that subunit. The protein is Large ribosomal subunit protein bL20 of Serratia proteamaculans (strain 568).